A 207-amino-acid polypeptide reads, in one-letter code: N-(5'-phosphoribosyl)anthranilate isomerase (207 aa).

This sequence belongs to the TrpF family.

It catalyses the reaction N-(5-phospho-beta-D-ribosyl)anthranilate = 1-(2-carboxyphenylamino)-1-deoxy-D-ribulose 5-phosphate. It functions in the pathway amino-acid biosynthesis; L-tryptophan biosynthesis; L-tryptophan from chorismate: step 3/5. The chain is N-(5'-phosphoribosyl)anthranilate isomerase from Legionella pneumophila (strain Lens).